A 541-amino-acid polypeptide reads, in one-letter code: Sorting nexin-27 (541 aa).

The segment at 1–42 (MADEDGEGIHPSAPHRNGGGGGGGGSGLHCAGNGGGGGGGPR) is disordered. Over residues 17–41 (NGGGGGGGGSGLHCAGNGGGGGGGP) the composition is skewed to gly residues. The PDZ domain maps to 43–136 (VVRIVKSESG…ELILTVLSVP (94 aa)). A phosphoserine mark is found at Ser-51 and Ser-62. The PX domain maps to 161 to 269 (QAVPISVPRY…EFLSESDENY (109 aa)). Positions 273–362 (SDVELRVALP…TCLTIRKWLF (90 aa)) constitute a Ras-associating domain. The FERM-like region F1 stretch occupies residues 273-362 (SDVELRVALP…TCLTIRKWLF (90 aa)). The tract at residues 373–421 (NDLAVTYFFHQAVDDVKKGYIKAEEKSYQLQKLYEQRKMVMYLNMLRTC) is FERM-like region F2. Residues 425–525 (NEIIFPHCAC…RVFCELKWRK (101 aa)) form an FERM-like region F3 region.

The protein belongs to the sorting nexin family. In terms of assembly, core component of the SNX27-retromer, a multiprotein complex composed of SNX27, the WASH complex and the retromer complex. Interacts (via PDZ domain) with a number of target transmembrane proteins (via PDZ-binding motif): ABCC4, ADRB2, ARHGEF7, GRIA1, GRIA2, GRIN1, GRIN2A GRIN2C, KCNJ6, KCNJ9 and SLC2A1/GLUT1. Interacts (via the FERM-like regions) with the WASH complex. Interacts with SNX1. Interacts with CYTIP. Isoform 1 and isoform 2 directly interact with DGKZ. Isoform 1 and isoform 2 interact with HT4R isoform 5-HTA(A). Interacts with MCC. Interacts (via PDZ domains) with SLC9A3; directs SLC9A3 membrane insertion from early endosomes to the plasma membrane. As to expression, widely expressed. Expressed in cells of hematopoietic origin (at protein level).

Its subcellular location is the early endosome membrane. It localises to the cytoplasm. It is found in the cytosol. In terms of biological role, involved in the retrograde transport from endosome to plasma membrane, a trafficking pathway that promotes the recycling of internalized transmembrane proteins. Following internalization, endocytosed transmembrane proteins are delivered to early endosomes and recycled to the plasma membrane instead of being degraded in lysosomes. SNX27 specifically binds and directs sorting of a subset of transmembrane proteins containing a PDZ-binding motif at the C-terminus: following interaction with target transmembrane proteins, associates with the retromer complex, preventing entry into the lysosomal pathway, and promotes retromer-tubule based plasma membrane recycling. SNX27 also binds with the WASH complex. Interacts with membranes containing phosphatidylinositol-3-phosphate (PtdIns(3P)). May participate in establishment of natural killer cell polarity. Recruits CYTIP to early endosomes. The polypeptide is Sorting nexin-27 (SNX27) (Homo sapiens (Human)).